Consider the following 133-residue polypeptide: Sigma factor-binding protein Crl (133 aa).

An essential for activity region spans residues 99 to 122 (TLDDFYVKLTKFVKEDCQLDLQAS).

Belongs to the Crl family.

It localises to the cytoplasm. In terms of biological role, binds to the sigma-S subunit of RNA polymerase, activating expression of sigma-S-regulated genes. Stimulates RNA polymerase holoenzyme formation and may bind to several other sigma factors, such as sigma-70 and sigma-32. This chain is Sigma factor-binding protein Crl, found in Photobacterium profundum (strain SS9).